Reading from the N-terminus, the 169-residue chain is ATP synthase subunit b (169 aa).

Residues 12 to 32 (HIYLGNALWYLICFAILLLLI) form a helical membrane-spanning segment.

This sequence belongs to the ATPase B chain family. In terms of assembly, F-type ATPases have 2 components, F(1) - the catalytic core - and F(0) - the membrane proton channel. F(1) has five subunits: alpha(3), beta(3), gamma(1), delta(1), epsilon(1). F(0) has three main subunits: a(1), b(2) and c(10-14). The alpha and beta chains form an alternating ring which encloses part of the gamma chain. F(1) is attached to F(0) by a central stalk formed by the gamma and epsilon chains, while a peripheral stalk is formed by the delta and b chains.

It localises to the cell membrane. In terms of biological role, f(1)F(0) ATP synthase produces ATP from ADP in the presence of a proton or sodium gradient. F-type ATPases consist of two structural domains, F(1) containing the extramembraneous catalytic core and F(0) containing the membrane proton channel, linked together by a central stalk and a peripheral stalk. During catalysis, ATP synthesis in the catalytic domain of F(1) is coupled via a rotary mechanism of the central stalk subunits to proton translocation. Component of the F(0) channel, it forms part of the peripheral stalk, linking F(1) to F(0). The sequence is that of ATP synthase subunit b from Lactobacillus helveticus (strain DPC 4571).